Here is a 413-residue protein sequence, read N- to C-terminus: Gamma-glutamyl phosphate reductase (413 aa).

The protein belongs to the gamma-glutamyl phosphate reductase family.

Its subcellular location is the cytoplasm. It catalyses the reaction L-glutamate 5-semialdehyde + phosphate + NADP(+) = L-glutamyl 5-phosphate + NADPH + H(+). The protein operates within amino-acid biosynthesis; L-proline biosynthesis; L-glutamate 5-semialdehyde from L-glutamate: step 2/2. In terms of biological role, catalyzes the NADPH-dependent reduction of L-glutamate 5-phosphate into L-glutamate 5-semialdehyde and phosphate. The product spontaneously undergoes cyclization to form 1-pyrroline-5-carboxylate. This is Gamma-glutamyl phosphate reductase from Thermus thermophilus (strain ATCC 27634 / DSM 579 / HB8).